A 511-amino-acid polypeptide reads, in one-letter code: MQLNPSEISELIKSRIQGLGDTAEIRNQGTVISVSDGICRIHGLSDVMQGEMLEFPGNTFGLALNLERDSVGAVILGEYEHISEGDTVKCTGRILEVPIGPELCGRVVNALGQPIDGKGPINTKLTTPIEKIAPGVIARQSVDQPMQTGIKAIDAMVPIGRGQRELIIGDRQTGKTAVAIDAIINQKGQGVTCIYVAIGQKASSIKNIVRALEQHGAMEYTIVVAATASESAAMQFVSAYSGCAMGEYFRDRGEDALIVYDDLSKQAVAYRQVSLLLRRPPGREAFPGDVFYLHSRLLERAARVNADYVEAFTKGAVKGKTGSLTALPIIETQAGDVSAFVPTNVISITDGQIFLETSLFNSGVRPAINAGISVSRVGGAAQTKVIKGLSGGIRTDLAQYRELAAFAQFASDLDASTRKQLDRGARVTELLKQAQYAPLSTSLMAVSLFAVNKGYFDDLEVKQVLAFESGLHGFMKSSHAALLQKIEDTKKLEKDDEAVLAAAIADFKKSF.

169–176 (GDRQTGKT) contributes to the ATP binding site.

Belongs to the ATPase alpha/beta chains family. F-type ATPases have 2 components, CF(1) - the catalytic core - and CF(0) - the membrane proton channel. CF(1) has five subunits: alpha(3), beta(3), gamma(1), delta(1), epsilon(1). CF(0) has three main subunits: a(1), b(2) and c(9-12). The alpha and beta chains form an alternating ring which encloses part of the gamma chain. CF(1) is attached to CF(0) by a central stalk formed by the gamma and epsilon chains, while a peripheral stalk is formed by the delta and b chains.

Its subcellular location is the cell inner membrane. It carries out the reaction ATP + H2O + 4 H(+)(in) = ADP + phosphate + 5 H(+)(out). Functionally, produces ATP from ADP in the presence of a proton gradient across the membrane. The alpha chain is a regulatory subunit. The polypeptide is ATP synthase subunit alpha (Janthinobacterium sp. (strain Marseille) (Minibacterium massiliensis)).